Here is a 232-residue protein sequence, read N- to C-terminus: Probable thiopurine S-methyltransferase (232 aa).

S-adenosyl-L-methionine is bound by residues 14–25 (WENRWQEGRTGF), Leu-54, Glu-75, and Arg-137. Phe-25 is a binding site for substrate.

This sequence belongs to the class I-like SAM-binding methyltransferase superfamily. TPMT family.

It localises to the cytoplasm. It catalyses the reaction S-adenosyl-L-methionine + a thiopurine = S-adenosyl-L-homocysteine + a thiopurine S-methylether.. This chain is Probable thiopurine S-methyltransferase (tpmt), found in Danio rerio (Zebrafish).